The chain runs to 477 residues: 3-succinoylsemialdehyde-pyridine dehydrogenase (477 aa).

Residue 202 to 208 (GDGPGVG) participates in NAD(+) binding. Catalysis depends on residues E246 and C280.

The protein belongs to the aldehyde dehydrogenase family.

It carries out the reaction 4-oxo-4-(pyridin-3-yl)butanal + NADP(+) + H2O = 4-oxo-4-(pyridin-3-yl)butanoate + NADPH + 2 H(+). It participates in alkaloid degradation; nicotine degradation. In terms of biological role, catalyzes the dehydrogenation of 3-succinoylsemialdehyde-pyridine to 3-succinoyl-pyridine in the nicotine degradation pathway. This chain is 3-succinoylsemialdehyde-pyridine dehydrogenase (ald), found in Pseudomonas sp.